A 125-amino-acid polypeptide reads, in one-letter code: UPF0738 protein GTNG_0708 (125 aa).

The protein belongs to the UPF0738 family.

This chain is UPF0738 protein GTNG_0708, found in Geobacillus thermodenitrificans (strain NG80-2).